Reading from the N-terminus, the 102-residue chain is YcgL domain-containing protein MS1047 (102 aa).

A YcgL domain is found at 1 to 85; sequence MLCAIYKSKK…KQESLFEQFK (85 aa).

The polypeptide is YcgL domain-containing protein MS1047 (Mannheimia succiniciproducens (strain KCTC 0769BP / MBEL55E)).